Here is a 62-residue protein sequence, read N- to C-terminus: Photosystem II reaction center protein Z (62 aa).

2 helical membrane passes run Ala-8–Ala-28 and Phe-41–Ile-61.

Belongs to the PsbZ family. As to quaternary structure, PSII is composed of 1 copy each of membrane proteins PsbA, PsbB, PsbC, PsbD, PsbE, PsbF, PsbH, PsbI, PsbJ, PsbK, PsbL, PsbM, PsbT, PsbY, PsbZ, Psb30/Ycf12, at least 3 peripheral proteins of the oxygen-evolving complex and a large number of cofactors. It forms dimeric complexes.

It localises to the plastid. The protein localises to the chloroplast thylakoid membrane. Its function is as follows. May control the interaction of photosystem II (PSII) cores with the light-harvesting antenna, regulates electron flow through the 2 photosystem reaction centers. PSII is a light-driven water plastoquinone oxidoreductase, using light energy to abstract electrons from H(2)O, generating a proton gradient subsequently used for ATP formation. The chain is Photosystem II reaction center protein Z from Vitis vinifera (Grape).